The primary structure comprises 98 residues: DNA-binding protein Fis (98 aa).

A DNA-binding region (H-T-H motif) is located at residues 74 to 93; the sequence is QTRAAQMMGINRGTLRKKLK.

This sequence belongs to the transcriptional regulatory Fis family. In terms of assembly, homodimer.

Its function is as follows. Activates ribosomal RNA transcription. Plays a direct role in upstream activation of rRNA promoters. This Sodalis glossinidius (strain morsitans) protein is DNA-binding protein Fis.